A 369-amino-acid chain; its full sequence is Tsukushi (369 aa).

Residues 1–19 (MQFLAWFNMLLLLPCFSTT) form the signal peptide. The region spanning 20-60 (KTCFPGCHCEVESFGLFDSFSLTKVDCSGIGSHIVPVPIPL) is the LRRNT domain. LRR repeat units lie at residues 61–81 (DTSY…SMLT), 87–108 (TLVS…TFSR), 111–132 (YLES…CFSS), 134–155 (PLGD…VFAS), 161–181 (PLNV…HEKS), 184–205 (NIQN…QGIP), 206–226 (LRYL…DFKG), 229–248 (GLIH…SPYS), 254–276 (ALQV…VIFG), 279–300 (SIQE…VLKY), and 303–323 (SLKS…KEGQ). The N-linked (GlcNAc...) asparagine glycan is linked to N76. N-linked (GlcNAc...) asparagine glycosylation is present at N189. An N-linked (GlcNAc...) asparagine glycan is attached at N284.

As to quaternary structure, forms a ternary complex with chordin/CHRD and BMP4. Interacts with FZD4 (via FZ domain); competes with WNT2B for binding to FZD4, inhibiting Wnt signaling and repressing peripheral eye development. Interacts with BMP4; shows stronger interaction with BMP4 than isoform 2. Interacts with DVR1/VG1; the interaction is inhibited by BMP4. Interacts with BMP7. In terms of assembly, interacts with FZD4 (via FZ domain); competes with WNT2B for binding to FZD4, inhibiting Wnt signaling and repressing peripheral eye development. Interacts with BMP4; shows weaker interaction with BMP4 than isoform 1. Interacts with DVR1/VG1; the interaction is inhibited by BMP4. Interacts with BMP7. Post-translationally, N-glycosylated. In terms of tissue distribution, during embryonic development, expressed in the middle primitive streak and Hensen's node. Expressed in the peripheral region of the developing eye. Expressed in the presomitic mesoderm during somitogenesis in a NOTCH-dependent manner.

It is found in the secreted. Its function is as follows. Contributes to various developmental events through its interactions with multiple signaling pathways. Dorsalizing factor involved in the induction of Hensen's node by inhibiting bone morphogenetic proteins during gastrulation and by enhancing DVR1/VG1 activity. Wnt signaling inhibitor which competes with WNT2B for binding to Wnt receptor FZD4 and represses WNT2B-dependent development of the peripheral eye. Shows strong bone morphogenetic protein antagonistic activity. In terms of biological role, shows weak bone morphogenetic protein antagonistic activity. This chain is Tsukushi (TSKU), found in Gallus gallus (Chicken).